Consider the following 267-residue polypeptide: Glutamate 5-kinase (267 aa).

Lys18 serves as a coordination point for ATP. Residues Ser58, Asp145, and Asn157 each coordinate substrate. Residues 177-178 (SD) and 219-225 (TGGMATK) contribute to the ATP site.

This sequence belongs to the glutamate 5-kinase family.

The protein localises to the cytoplasm. It carries out the reaction L-glutamate + ATP = L-glutamyl 5-phosphate + ADP. Its pathway is amino-acid biosynthesis; L-proline biosynthesis; L-glutamate 5-semialdehyde from L-glutamate: step 1/2. Its function is as follows. Catalyzes the transfer of a phosphate group to glutamate to form L-glutamate 5-phosphate. The protein is Glutamate 5-kinase of Clostridium tetani (strain Massachusetts / E88).